Consider the following 1420-residue polypeptide: MKALLDLFKQTQGDEQFDVIKIGLASPEKIRSWSFGEVRKPETINYRTFKPERDGLFCAKIFGPTKDYECLCGKYKRLKFRGVICEKCGVEVTLAKVRRERMGHIELAAPVAHIWFLKSLPSRLGMVLDMTLRDIERVLYFEAYVVVDPGMTPEGAMKRGQIMSEDEYIAKTEEYGDGAFTAIMGAEGIRDLLRGIDIDREVETIRADLKATGSDAKIKKYAKRLKVLEAFQTSGIKPDWMIMEVLPVLPPELRPLVPLDGGRFATSDLNDLYRRVINRNNRLKRLLELRAPEIIVRNEKRMLQEAVDSLLDNGRRGKAMTGANKRPLKSLAEMIKGKSGRFRQNLLGKRVDYSGRSVIVVGPTLKLHQCGLPKLMALELFKPFIFNKLETLGIATTIKAAKKEVESQTPIVWDILEEVIREHPIMLNRAPTLHRLGIQAFEPMLIEGKAIQLHPLVCAAFNADFDGDQMAVHVPLSLEAQMEARTLMLASNNVLFPANGEPSIVPSQDVVLGLYYATRDKINGKGEGMVFANIAEVIRAHEAGQVELASRVAVRITEFEIVDKKAEGDARFAEKTKIYQTSVGRAILSEILPKGMTFEEINKPLKKKEISRLINTSFRKCGLRETVIFADRLLQSGFRLATNAGISVAIDDMLIPTSKERIITEATNKVKEYDKQFMSGLVTNQERYNNVVDIWGAAGDQVGKAMMDELSHVDVLDRNSKTVRQESFNSIYMMADSGARGSAAQIRQLAGMRGLMAKPDGSIIETPITANFREGLNVLQYFISTHGARKGLADTALKTANSGYLTRRLCDVTQDLVVIEDDCGATSGVTMKALVEGGEIIEALRDRILGRVCIGDIVHPDTQEVIVANDTLLDEDHVDQIVALGIDEVKVRTVLSCLTRFGLCAKCYGRDLGRGGLVNVGEAVGVIAAQSIGEPGTQLTMRTFHIGGAASRALVASNIEAKSNGALKFSGTMRIVKNAKGEQIVISRSGEALIIDDNGRERERHKVPYGATLLFKEDAAVKAGASLATWDPLTRPIISEYAGIARFDNVEEGVTVAKQVDEVTGLSTLVVIDGKRRSAASKGVRPMINLVDDKGGEVMIAGTDHPVNIGLQVGALITVKDGQKVEVGEVLARIPIESQKTRDITGGLPRVAELFEARSPKDAAVLAKVTGTVSFGKETKGKQRLVITDMDGEANEFLIPKEKQVLVHDGQVVNKGEMIVEGPADPHDILTLRGIEELAIYIVDEVQDVYRLQGVKINDKHIEVIVRQMLRRVQITDGGDTAYITGEQVERSKLYDANDLVIAAGKRPAQFENVLLGITKASLSTDSFISAASFQETTRVLTEAAIMGKTDTLRGLKENVIIGRLIPAGTGLSYRRARKVREQFERDRAQMIAAEEEAIANTPVEIEAEVIAPAGEADPS.

Residues C70, C72, C85, and C88 each coordinate Zn(2+). Positions 464, 466, and 468 each coordinate Mg(2+). Zn(2+) is bound by residues C823, C897, C904, and C907.

The protein belongs to the RNA polymerase beta' chain family. In terms of assembly, the RNAP catalytic core consists of 2 alpha, 1 beta, 1 beta' and 1 omega subunit. When a sigma factor is associated with the core the holoenzyme is formed, which can initiate transcription. Mg(2+) is required as a cofactor. The cofactor is Zn(2+).

The catalysed reaction is RNA(n) + a ribonucleoside 5'-triphosphate = RNA(n+1) + diphosphate. Its function is as follows. DNA-dependent RNA polymerase catalyzes the transcription of DNA into RNA using the four ribonucleoside triphosphates as substrates. The sequence is that of DNA-directed RNA polymerase subunit beta' from Polynucleobacter asymbioticus (strain DSM 18221 / CIP 109841 / QLW-P1DMWA-1) (Polynucleobacter necessarius subsp. asymbioticus).